The sequence spans 159 residues: Serine-protein kinase RsbW (159 aa).

It belongs to the anti-sigma-factor family.

The catalysed reaction is L-seryl-[protein] + ATP = O-phospho-L-seryl-[protein] + ADP + H(+). The enzyme catalyses L-threonyl-[protein] + ATP = O-phospho-L-threonyl-[protein] + ADP + H(+). Negative regulator of sigma-B activity. Phosphorylates and inactivates its specific antagonist protein, RsbV. Upon phosphorylation of RsbV, RsbW is released and binds to sigma-B, thereby blocking its ability to form an RNA polymerase holoenzyme (E-sigma-B). The chain is Serine-protein kinase RsbW from Staphylococcus aureus.